Reading from the N-terminus, the 431-residue chain is Polyprenol-phosphate-mannose-dependent alpha-(1-2)-phosphatidylinositol pentamannoside mannosyltransferase (431 aa).

A run of 10 helical transmembrane segments spans residues 43-63 (AAVLLLVLSVGARLAWTYLAP), 108-128 (FAAVVFYPLHLVPFGLIALLW), 148-168 (GGTAETGHFAAMLWTAIAIWI), 175-195 (FDYGQINVLLMLAALWAVYTP), 202-222 (LLVGVASGVKLTPAITAVYLV), 229-249 (AAAFSVVVFLATVGVSLLVVG), 290-310 (GFGPLVLAAIASTAVLAILAW), 332-352 (LSPISWTHHWVWLVPLMIWLI), 364-384 (ILGWGWLVLTIVGVPWLLSFA), and 397-417 (LAWAGLVYVVATLATLGWIAA).

The protein belongs to the glycosyltransferase 87 family.

The protein localises to the cell membrane. The protein operates within phospholipid metabolism; phosphatidylinositol metabolism. In terms of biological role, catalyzes the alpha-1,2 addition of a mannose residue from polyprenol-phosphate-mannose (PPM) to a monoacyl phosphatidylinositol tetramannoside (AcPIM4) to generate a monoacyl phosphatidylinositol pentamannoside (AcPIM5). This Mycobacterium tuberculosis (strain CDC 1551 / Oshkosh) protein is Polyprenol-phosphate-mannose-dependent alpha-(1-2)-phosphatidylinositol pentamannoside mannosyltransferase (pimE).